We begin with the raw amino-acid sequence, 90 residues long: Large ribosomal subunit protein bL27 (90 aa).

The protein belongs to the bacterial ribosomal protein bL27 family.

The polypeptide is Large ribosomal subunit protein bL27 (Rhodopseudomonas palustris (strain BisB5)).